Consider the following 442-residue polypeptide: Ribulose bisphosphate carboxylase/oxygenase activase 1, chloroplastic (442 aa).

A chloroplast-targeting transit peptide spans 1 to 58 (MATSVSTIGAVNKTPLSLNNSVAGTSVPSTAFFGKTLKKVYGKGVSSPKVTNKSLRIV). Residue 169–176 (GGKGQGKS) participates in ATP binding.

Belongs to the RuBisCO activase family.

It localises to the plastid. Its subcellular location is the chloroplast stroma. Functionally, activation of RuBisCO (ribulose-1,5-bisphosphate carboxylase/oxygenase; EC 4.1.1.39) involves the ATP-dependent carboxylation of the epsilon-amino group of lysine leading to a carbamate structure. The polypeptide is Ribulose bisphosphate carboxylase/oxygenase activase 1, chloroplastic (Nicotiana tabacum (Common tobacco)).